The chain runs to 92 residues: Large ribosomal subunit protein eL43A (92 aa).

The segment at 39–60 (CSFCGKKTVKRGAAGIWTCSCC) adopts a C4-type zinc-finger fold. Residue Ser40 is modified to Phosphoserine.

This sequence belongs to the eukaryotic ribosomal protein eL43 family. Component of the large ribosomal subunit (LSU). Mature yeast ribosomes consist of a small (40S) and a large (60S) subunit. The 40S small subunit contains 1 molecule of ribosomal RNA (18S rRNA) and 33 different proteins (encoded by 57 genes). The large 60S subunit contains 3 rRNA molecules (25S, 5.8S and 5S rRNA) and 46 different proteins (encoded by 81 genes).

Its subcellular location is the cytoplasm. In terms of biological role, component of the ribosome, a large ribonucleoprotein complex responsible for the synthesis of proteins in the cell. The small ribosomal subunit (SSU) binds messenger RNAs (mRNAs) and translates the encoded message by selecting cognate aminoacyl-transfer RNA (tRNA) molecules. The large subunit (LSU) contains the ribosomal catalytic site termed the peptidyl transferase center (PTC), which catalyzes the formation of peptide bonds, thereby polymerizing the amino acids delivered by tRNAs into a polypeptide chain. The nascent polypeptides leave the ribosome through a tunnel in the LSU and interact with protein factors that function in enzymatic processing, targeting, and the membrane insertion of nascent chains at the exit of the ribosomal tunnel. In Saccharomyces cerevisiae (strain ATCC 204508 / S288c) (Baker's yeast), this protein is Large ribosomal subunit protein eL43A.